The chain runs to 581 residues: Arginine--tRNA ligase (581 aa).

The short motif at 122 to 132 (PNVAKPMHVGH) is the 'HIGH' region element.

This sequence belongs to the class-I aminoacyl-tRNA synthetase family. In terms of assembly, monomer.

It is found in the cytoplasm. It catalyses the reaction tRNA(Arg) + L-arginine + ATP = L-arginyl-tRNA(Arg) + AMP + diphosphate. The polypeptide is Arginine--tRNA ligase (Francisella tularensis subsp. tularensis (strain FSC 198)).